A 436-amino-acid chain; its full sequence is 3-ketoacyl-CoA thiolase (436 aa).

Residue Cys-99 is the Acyl-thioester intermediate of the active site. Residues His-392 and Cys-422 each act as proton acceptor in the active site.

It belongs to the thiolase-like superfamily. Thiolase family. Heterotetramer of two alpha chains (FadJ) and two beta chains (FadI).

Its subcellular location is the cytoplasm. It catalyses the reaction an acyl-CoA + acetyl-CoA = a 3-oxoacyl-CoA + CoA. It functions in the pathway lipid metabolism; fatty acid beta-oxidation. Its function is as follows. Catalyzes the final step of fatty acid oxidation in which acetyl-CoA is released and the CoA ester of a fatty acid two carbons shorter is formed. The chain is 3-ketoacyl-CoA thiolase from Enterobacter sp. (strain 638).